The chain runs to 262 residues: Catechol O-methyltransferase domain-containing protein 1 (262 aa).

Residues 12–32 form a helical; Signal-anchor for type II membrane protein membrane-spanning segment; sequence AALALGSAALGAAFATGLLLG. Residues Asp108, 110–111, Ser116, Glu134, Val135, Ala163, Asp185, Asp187, and Tyr194 contribute to the S-adenosyl-L-methionine site; that span reads GT.

It belongs to the class I-like SAM-binding methyltransferase superfamily. Cation-dependent O-methyltransferase family. As to quaternary structure, homodimer.

The protein localises to the membrane. Putative O-methyltransferase. The protein is Catechol O-methyltransferase domain-containing protein 1 (Comtd1) of Mus musculus (Mouse).